We begin with the raw amino-acid sequence, 414 residues long: Argininosuccinate synthase (414 aa).

Residue 12-20 (AYSGGLDTS) participates in ATP binding. The L-citrulline site is built by tyrosine 90 and serine 95. An ATP-binding site is contributed by glycine 120. Positions 122, 126, and 127 each coordinate L-aspartate. Asparagine 126 is a binding site for L-citrulline. Positions 130, 179, 188, 264, and 276 each coordinate L-citrulline.

Belongs to the argininosuccinate synthase family. Type 1 subfamily. As to quaternary structure, homotetramer.

The protein localises to the cytoplasm. The enzyme catalyses L-citrulline + L-aspartate + ATP = 2-(N(omega)-L-arginino)succinate + AMP + diphosphate + H(+). It participates in amino-acid biosynthesis; L-arginine biosynthesis; L-arginine from L-ornithine and carbamoyl phosphate: step 2/3. The protein is Argininosuccinate synthase of Alkaliphilus metalliredigens (strain QYMF).